Here is a 414-residue protein sequence, read N- to C-terminus: E3 ubiquitin-protein ligase makorin-2 (414 aa).

2 C3H1-type zinc fingers span residues 2-29 (STKQVTCRYFLHGVCREGSRCLFSHDLT) and 31-58 (SKPSTICKYYQRGACAYGDRCRYDHIKP). Positions 57–94 (KPPGRGSGAPADHSNRSSSSAGASAPGPGPPANTSKHL) are disordered. A compositionally biased stretch (low complexity) spans 73-82 (SSSSAGASAP). Residues 164 to 191 (QTSPQICPFLAAGQCQYGESCPYLHGEM) form a C3H1-type 3 zinc finger. The makorin-type Cys-His stretch occupies residues 192–221 (CEICRQHVLHPHDPEQRAAHEKKCMVAFEM). An RING-type zinc finger spans residues 237 to 291 (CKICLDVVYEKSSPSERRFGILSSCAHTYCLNCIRQWRCVEQLHNQIRKSCPECR). The C3H1-type 4 zinc-finger motif lies at 320 to 349 (GVSKKACKYFDQGRGTCPFGGKCFYMHAYA).

Its subcellular location is the cytoplasm. It is found in the nucleus. It catalyses the reaction S-ubiquitinyl-[E2 ubiquitin-conjugating enzyme]-L-cysteine + [acceptor protein]-L-lysine = [E2 ubiquitin-conjugating enzyme]-L-cysteine + N(6)-ubiquitinyl-[acceptor protein]-L-lysine.. It participates in protein modification; protein ubiquitination. E3 ubiquitin ligase catalyzing the covalent attachment of ubiquitin moieties onto substrate proteins. Inhibits neurogenesis and axis formation during embryonic development by modulating the phosphatidylinositol 3-kinase (PI3K) pathway. Acts downstream of PI3K and akt1 to up-regulate gsk3b mRNA expression. The chain is E3 ubiquitin-protein ligase makorin-2 (mkrn2) from Danio rerio (Zebrafish).